We begin with the raw amino-acid sequence, 182 residues long: Probable peptidyl-prolyl cis-trans isomerase A (182 aa).

A PPIase cyclophilin-type domain is found at 13–181 (ATATATLHTN…DPVVIESITI (169 aa)).

Belongs to the cyclophilin-type PPIase family.

Its subcellular location is the cytoplasm. It carries out the reaction [protein]-peptidylproline (omega=180) = [protein]-peptidylproline (omega=0). PPIases accelerate the folding of proteins. It catalyzes the cis-trans isomerization of proline imidic peptide bonds in oligopeptides. This chain is Probable peptidyl-prolyl cis-trans isomerase A (ppiA), found in Mycobacterium bovis (strain ATCC BAA-935 / AF2122/97).